A 479-amino-acid polypeptide reads, in one-letter code: Ubiquinone biosynthesis monooxygenase COQ6, mitochondrial (479 aa).

The protein belongs to the UbiH/COQ6 family. In terms of assembly, component of a multi-subunit COQ enzyme complex, composed of at least COQ3, COQ4, COQ5, COQ6, COQ7 and COQ9. FAD serves as cofactor.

It localises to the mitochondrion inner membrane. The catalysed reaction is 4-hydroxy-3-(all-trans-decaprenyl)benzoate + 2 reduced [2Fe-2S]-[ferredoxin] + O2 + 2 H(+) = 3,4-dihydroxy-5-(all-trans-decaprenyl)benzoate + 2 oxidized [2Fe-2S]-[ferredoxin] + H2O. The enzyme catalyses 2-methoxy-6-(all-trans-decaprenyl)phenol + 2 reduced [2Fe-2S]-[ferredoxin] + O2 + 2 H(+) = 2-methoxy-6-(all-trans-decaprenyl)benzene-1,4-diol + 2 oxidized [2Fe-2S]-[ferredoxin] + H2O. The protein operates within cofactor biosynthesis; ubiquinone biosynthesis. Its function is as follows. FAD-dependent monooxygenase required for two non-consecutive steps during ubiquinone biosynthesis. Required for the C5-ring hydroxylation during ubiquinone biosynthesis by catalyzing the hydroxylation of 4-hydroxy-3-(all-trans-decaprenyl)benzoic acid to 3,4-dihydroxy-5-(all-trans-decaprenyl)benzoic acid. Also acts downstream of COQ4, for the C1-hydroxylation during ubiquinone biosynthesis by catalyzing the hydroxylation of 2-methoxy-6-(all-trans-decaprenyl)phenol to 2-methoxy-6-(all-trans-decaprenyl)benzene-1,4-diol. The electrons required for the hydroxylation reaction are funneled indirectly to coq6 from NADPH via a ferredoxin/ferredoxin reductase system. The chain is Ubiquinone biosynthesis monooxygenase COQ6, mitochondrial from Schizosaccharomyces pombe (strain 972 / ATCC 24843) (Fission yeast).